The following is a 78-amino-acid chain: Translational regulator CsrA (78 aa).

The protein belongs to the CsrA/RsmA family. Homodimer; the beta-strands of each monomer intercalate to form a hydrophobic core, while the alpha-helices form wings that extend away from the core.

Its subcellular location is the cytoplasm. Functionally, a translational regulator that binds mRNA to regulate translation initiation and/or mRNA stability. Usually binds in the 5'-UTR at or near the Shine-Dalgarno sequence preventing ribosome-binding, thus repressing translation. Its main target seems to be the major flagellin gene, while its function is anatagonized by FliW. The sequence is that of Translational regulator CsrA from Geobacter metallireducens (strain ATCC 53774 / DSM 7210 / GS-15).